A 353-amino-acid chain; its full sequence is MTIAIGKSSKQPQGLFDSMDDWLRRDRFVFVGWSGLLLFPCAYFALGGWLTGTTFVTSWYTHGLASSYLEGCNFLTAAVSTPANSLAHSLLLLWGPEAQGDFTRWCQLGGLWAFVAFHGAFGLIGFMLRQFEIARSVGLRPYNAIAFTGPIAVFVSVFLIYPLGQSGWFFAPSFGVAAIFRFILFFQGFHNWTLNPFHMMGVAGVLGAALLCAIHGATVENTIFEDGDGANTFRAFNPTQSEETYSMVTANRFWSQIFGVAFANKRWLHFFMLFVPVTGLWMSAIGVVGLALNLRAYDFVSQEIRAAEDPEFETFYTKNILLNEGIRAWMAAQDQPHENLVFPEEVLPRGNAL.

The residue at position 2 (threonine 2) is an N-acetylthreonine. Threonine 2 bears the Phosphothreonine mark. Residues cysteine 41–threonine 61 form a helical membrane-spanning segment. Histidine 118 is a chlorophyll a binding site. A helical transmembrane segment spans residues glycine 125–proline 141. Glutamine 130 and asparagine 143 together coordinate pheophytin a. The helical transmembrane segment at valine 153–serine 166 threads the bilayer. Histidine 198 is a binding site for chlorophyll a. A helical transmembrane segment spans residues alanine 208–aspartate 228. Histidine 215 and phenylalanine 262 together coordinate a plastoquinone. Histidine 215 serves as a coordination point for Fe cation. Histidine 269 provides a ligand contact to Fe cation. Residues glycine 279–arginine 295 traverse the membrane as a helical segment.

The protein belongs to the reaction center PufL/M/PsbA/D family. In terms of assembly, PSII is composed of 1 copy each of membrane proteins PsbA, PsbB, PsbC, PsbD, PsbE, PsbF, PsbH, PsbI, PsbJ, PsbK, PsbL, PsbM, PsbT, PsbX, PsbY, PsbZ, Psb30/Ycf12, at least 3 peripheral proteins of the oxygen-evolving complex and a large number of cofactors. It forms dimeric complexes. The D1/D2 heterodimer binds P680, chlorophylls that are the primary electron donor of PSII, and subsequent electron acceptors. It shares a non-heme iron and each subunit binds pheophytin, quinone, additional chlorophylls, carotenoids and lipids. There is also a Cl(-1) ion associated with D1 and D2, which is required for oxygen evolution. The PSII complex binds additional chlorophylls, carotenoids and specific lipids. is required as a cofactor.

Its subcellular location is the plastid. The protein localises to the chloroplast thylakoid membrane. The catalysed reaction is 2 a plastoquinone + 4 hnu + 2 H2O = 2 a plastoquinol + O2. Functionally, photosystem II (PSII) is a light-driven water:plastoquinone oxidoreductase that uses light energy to abstract electrons from H(2)O, generating O(2) and a proton gradient subsequently used for ATP formation. It consists of a core antenna complex that captures photons, and an electron transfer chain that converts photonic excitation into a charge separation. The D1/D2 (PsbA/PsbD) reaction center heterodimer binds P680, the primary electron donor of PSII as well as several subsequent electron acceptors. D2 is needed for assembly of a stable PSII complex. This chain is Photosystem II D2 protein, found in Staurastrum punctulatum (Green alga).